A 181-amino-acid polypeptide reads, in one-letter code: Adenylate kinase (181 aa).

An ATP-binding site is contributed by 10–15 (GAGKGT). Positions 30–59 (STGELFRRNIEKDTKLGHEAKKYLDAGDLV) are NMP. Residues Thr31, Arg36, 57–59 (DLV), 85–88 (GYPR), and Gln92 contribute to the AMP site. The tract at residues 126–132 (GRGRADD) is LID. Arg127 is an ATP binding site. The AMP site is built by Arg129 and Arg140. Residue Gly166 participates in ATP binding.

This sequence belongs to the adenylate kinase family. In terms of assembly, monomer.

It localises to the cytoplasm. The catalysed reaction is AMP + ATP = 2 ADP. Its pathway is purine metabolism; AMP biosynthesis via salvage pathway; AMP from ADP: step 1/1. Its function is as follows. Catalyzes the reversible transfer of the terminal phosphate group between ATP and AMP. Plays an important role in cellular energy homeostasis and in adenine nucleotide metabolism. The chain is Adenylate kinase from Mycobacterium leprae (strain Br4923).